Reading from the N-terminus, the 55-residue chain is Hirustasin (55 aa).

Intrachain disulfides connect cysteine 6–cysteine 17, cysteine 11–cysteine 22, cysteine 24–cysteine 44, cysteine 29–cysteine 48, and cysteine 33–cysteine 50. The Antistasin-like domain maps to 24–50 (CNEVHCRIRCKYGLKKDENGCEYPCSC).

It belongs to the protease inhibitor I15 (antistasin) family.

It is found in the secreted. Acts as an inhibitor of tissue kallikrein, trypsin, chymotrypsin and neutrophil cathepsin G. This chain is Hirustasin, found in Hirudo medicinalis (Medicinal leech).